The chain runs to 366 residues: GTP cyclohydrolase 1 type 2 homolog (366 aa).

Positions 64, 65, 102, 326, and 329 each coordinate a divalent metal cation.

The protein belongs to the GTP cyclohydrolase I type 2/NIF3 family. Homohexamer.

The chain is GTP cyclohydrolase 1 type 2 homolog from Staphylococcus epidermidis (strain ATCC 35984 / DSM 28319 / BCRC 17069 / CCUG 31568 / BM 3577 / RP62A).